A 1098-amino-acid polypeptide reads, in one-letter code: Trehalose synthase complex regulatory subunit TSL1 (1098 aa).

Phosphoserine is present on residues serine 49, serine 53, serine 56, serine 71, serine 77, serine 135, serine 147, and serine 161. 3 disordered regions span residues 59-86 (APAPEQGVPPAISRSATRSPSAFNRASS), 129-168 (SVERFFSPSSNIPTDRIASPIQHEHDSGSRIASPIQQQQQ), and 192-244 (SQTS…PSIK). A compositionally biased stretch (polar residues) spans 72–86 (RSATRSPSAFNRASS). 2 consecutive repeat copies span residues 144 to 150 (RIASPIQ) and 158 to 164 (RIASPIQ). Positions 144–164 (RIASPIQHEHDSGSRIASPIQ) are 2 X 7 AA repeats of R-I-A-S-P-I-Q. A compositionally biased stretch (polar residues) spans 213–227 (RPTSAATSLVNRTKQ). Residues 228–242 (GSASSGSSGSSAPPS) are compositionally biased toward low complexity. The residue at position 229 (serine 229) is a Phosphoserine. At threonine 251 the chain carries Phosphothreonine. Positions 274-297 (ADISSSETSSQHNESDPDDLTTAP) are disordered. The residue at position 303 (serine 303) is a Phosphoserine. Positions 320 to 812 (GGYSNKSKLK…FNQEGSKIFK (493 aa)) are TPS complex domain. Position 815 is a phosphothreonine (threonine 815). The disordered stretch occupies residues 1000–1027 (SSGQITNIQTPSQQNPSDQEQQPPASPT).

It in the C-terminal section; belongs to the glycosyltransferase 20 family. As to quaternary structure, the trehalose synthase complex is composed of the two catalytic subunits TPS1 and TPS2, and at least one of the two regulatory subunits TPS3 or TSL1.

The protein resides in the cytoplasm. Its function is as follows. Regulatory subunit of the trehalose synthase complex that catalyzes the production of trehalose from glucose-6-phosphate and UDP-glucose in a two step process. May stabilize the trehalose synthase complex, and confer sensitivity to physiological concentrations of phosphate and to fructose 6-phosphate. The protein is Trehalose synthase complex regulatory subunit TSL1 (TSL1) of Saccharomyces cerevisiae (strain ATCC 204508 / S288c) (Baker's yeast).